The primary structure comprises 421 residues: NAD-specific glutamate dehydrogenase (421 aa).

Positions 70 and 94 each coordinate substrate. Residue K106 is the Proton donor of the active site. Positions 191 and 222 each coordinate NAD(+). S355 provides a ligand contact to substrate.

Belongs to the Glu/Leu/Phe/Val dehydrogenases family. In terms of assembly, homohexamer.

The enzyme catalyses L-glutamate + NAD(+) + H2O = 2-oxoglutarate + NH4(+) + NADH + H(+). It functions in the pathway amino-acid degradation; L-glutamate degradation via hydroxyglutarate pathway; crotonoyl-CoA from L-glutamate: step 1/5. The protein is NAD-specific glutamate dehydrogenase of Peptoniphilus asaccharolyticus (Peptostreptococcus asaccharolyticus).